Consider the following 388-residue polypeptide: Succinate--CoA ligase [ADP-forming] subunit beta (388 aa).

The ATP-grasp domain occupies 9-244; the sequence is KSLFAEYGLP…PSQDDAREAH (236 aa). ATP contacts are provided by residues Lys-46, 53-55, Glu-99, Thr-102, and Glu-107; that span reads GRG. Residues Asn-199 and Asp-213 each coordinate Mg(2+). Substrate-binding positions include Asn-264 and 321-323; that span reads GIV.

This sequence belongs to the succinate/malate CoA ligase beta subunit family. Heterotetramer of two alpha and two beta subunits. Mg(2+) serves as cofactor.

The enzyme catalyses succinate + ATP + CoA = succinyl-CoA + ADP + phosphate. It catalyses the reaction GTP + succinate + CoA = succinyl-CoA + GDP + phosphate. It participates in carbohydrate metabolism; tricarboxylic acid cycle; succinate from succinyl-CoA (ligase route): step 1/1. Succinyl-CoA synthetase functions in the citric acid cycle (TCA), coupling the hydrolysis of succinyl-CoA to the synthesis of either ATP or GTP and thus represents the only step of substrate-level phosphorylation in the TCA. The beta subunit provides nucleotide specificity of the enzyme and binds the substrate succinate, while the binding sites for coenzyme A and phosphate are found in the alpha subunit. This Shewanella woodyi (strain ATCC 51908 / MS32) protein is Succinate--CoA ligase [ADP-forming] subunit beta.